Reading from the N-terminus, the 240-residue chain is Probable transcriptional regulatory protein HPAG1_0159 (240 aa).

It belongs to the TACO1 family.

Its subcellular location is the cytoplasm. The chain is Probable transcriptional regulatory protein HPAG1_0159 from Helicobacter pylori (strain HPAG1).